The sequence spans 206 residues: Putative metal transport protein HI_1621 (206 aa).

6 helical membrane passes run 6 to 26 (GVLH…GIAV), 38 to 58 (LTAL…PVGI), 72 to 92 (FLGW…VIFF), 94 to 114 (FGGF…AVIA), 136 to 156 (IGAG…VLML), and 165 to 185 (LVWL…IISV).

The protein belongs to the CbiM family.

It localises to the cell membrane. May be involved in metal transport. This chain is Putative metal transport protein HI_1621, found in Haemophilus influenzae (strain ATCC 51907 / DSM 11121 / KW20 / Rd).